The primary structure comprises 157 residues: DNA gyrase inhibitor 2 (157 aa).

This sequence belongs to the DNA gyrase inhibitor family. In terms of assembly, interacts with DNA gyrase.

Its subcellular location is the cytoplasm. Inhibits the supercoiling activity of DNA gyrase. Acts by inhibiting DNA gyrase at an early step, prior to (or at the step of) binding of DNA by the gyrase. It protects cells against toxins that target DNA gyrase, by inhibiting activity of these toxins and reducing the formation of lethal double-strand breaks in the cell. This chain is DNA gyrase inhibitor 2, found in Dickeya dadantii (strain 3937) (Erwinia chrysanthemi (strain 3937)).